The chain runs to 220 residues: uncharacterized protein (220 aa).

This sequence belongs to the DadA oxidoreductase family. Requires FAD as cofactor.

This is an uncharacterized protein from Halorhodospira halophila (Ectothiorhodospira halophila).